Reading from the N-terminus, the 445-residue chain is CBL-interacting protein kinase 3 (445 aa).

The Protein kinase domain occupies 19 to 274; the sequence is YELGRAIGQG…TSQVLQDQWF (256 aa). ATP contacts are provided by residues 25–33 and Lys48; that span reads IGQGTFAKV. The Proton acceptor role is filled by Asp142. The tract at residues 160-189 is activation loop; that stretch reads DFGLSAISEQVKADGLLHTTCGTPNYVAPE. An NAF domain is found at 309–336; the sequence is AMEEQPTLMNAFELISLNKGLNLDNFFE. The interval 342–371 is PPI; it reads KRETRFTSQCPPKEIINRIEEAANLLGFNI.

The protein belongs to the protein kinase superfamily. CAMK Ser/Thr protein kinase family. SNF1 subfamily. It depends on Mn(2+) as a cofactor.

The enzyme catalyses L-seryl-[protein] + ATP = O-phospho-L-seryl-[protein] + ADP + H(+). It catalyses the reaction L-threonyl-[protein] + ATP = O-phospho-L-threonyl-[protein] + ADP + H(+). In terms of biological role, CIPK serine-threonine protein kinases interact with CBL proteins. Binding of a CBL protein to the regulatory NAF domain of CIPK protein lead to the activation of the kinase in a calcium-dependent manner. The polypeptide is CBL-interacting protein kinase 3 (CIPK3) (Oryza sativa subsp. japonica (Rice)).